The sequence spans 164 residues: MTIAFYPGSFDPMTNGHLDVLIQALNVASKVIVAVGIHPGKAPLFSFDERAALISRALSETLPGEAARVEVVSFDNLVVDAARQHGAHLLLRGLRDGTDLDYEMQMAGMNRQMAPDIQTVFLPAGTSSRPITATLVRQIAAMGGNVDAFVPKAVLEALNAKLKR.

Ser-9 serves as a coordination point for substrate. ATP contacts are provided by residues 9-10 and His-17; that span reads SF. Lys-41, Val-78, and Arg-92 together coordinate substrate. Residues 93–95, Glu-103, and 128–134 each bind ATP; these read GLR and SRPITAT.

This sequence belongs to the bacterial CoaD family. In terms of assembly, homohexamer. It depends on Mg(2+) as a cofactor.

The protein localises to the cytoplasm. It carries out the reaction (R)-4'-phosphopantetheine + ATP + H(+) = 3'-dephospho-CoA + diphosphate. Its pathway is cofactor biosynthesis; coenzyme A biosynthesis; CoA from (R)-pantothenate: step 4/5. Functionally, reversibly transfers an adenylyl group from ATP to 4'-phosphopantetheine, yielding dephospho-CoA (dPCoA) and pyrophosphate. This is Phosphopantetheine adenylyltransferase from Agrobacterium fabrum (strain C58 / ATCC 33970) (Agrobacterium tumefaciens (strain C58)).